We begin with the raw amino-acid sequence, 317 residues long: Probable cell division protein WhiA (317 aa).

The H-T-H motif DNA-binding region spans S281–K314.

Belongs to the WhiA family.

In terms of biological role, involved in cell division and chromosome segregation. This Clostridium novyi (strain NT) protein is Probable cell division protein WhiA.